Here is a 201-residue protein sequence, read N- to C-terminus: Probable GTP-binding protein EngB (201 aa).

One can recognise an EngB-type G domain in the interval 25 to 199 (HGIEIAFIGY…KSKLNFWYEK (175 aa)). Residues 33-40 (GYSNSGKS), 60-64 (GRTQL), 78-81 (DLPG), 145-148 (TKCD), and 178-180 (FSS) each bind GTP. Positions 40 and 62 each coordinate Mg(2+).

Belongs to the TRAFAC class TrmE-Era-EngA-EngB-Septin-like GTPase superfamily. EngB GTPase family. It depends on Mg(2+) as a cofactor.

Necessary for normal cell division and for the maintenance of normal septation. The polypeptide is Probable GTP-binding protein EngB (Buchnera aphidicola subsp. Schizaphis graminum (strain Sg)).